Reading from the N-terminus, the 431-residue chain is Histidine--tRNA ligase (431 aa).

It belongs to the class-II aminoacyl-tRNA synthetase family. Homodimer.

It localises to the cytoplasm. The catalysed reaction is tRNA(His) + L-histidine + ATP = L-histidyl-tRNA(His) + AMP + diphosphate + H(+). The polypeptide is Histidine--tRNA ligase (Ligilactobacillus salivarius (strain UCC118) (Lactobacillus salivarius)).